The sequence spans 545 residues: MESYKPVWLKGAVILAINLIDKGYKPVAVGLGERDFYIDVKSDTSITLDEVKKAINENVLANVPIENNQIVYKGNKVSIIEDKVSISTNLNPKYFEILNISTHHPNPNEQYVRIRGVAFETEEQLKDYLTWLEKAEETDHRLIGEKLDLFSFHEEAGSGLVLFHPKGQTIRNELIAFMREINDSMGYQEVYTSHVFKTDIWKISGHYTLYRDKLIVFNMEGDEYGVKPMNCPAHILIYKSKPRTYRDLPIRFSEFGHVYRWEKKGELYGLLRVRGFVQDDGHIFLREDQLMEEIKMLISKTVEVWHKFGFKDDDIKPYLSTRPDESIGSDELWEKATNALISALQESGLKFGIKEKEGAFYGPKIDFEIRDSLGRWWQLSTIQVDFNLPERFKLEYIDKDGIKKRPVMVHRAIYGSIDRFVAILLEHFKGKLPTWLSSVQVRVLPITDEVNEYAEKVLNDMRKRRIRAEIDYAGETLSKRIKNAYDQGVPYILIVGKKEASEGTVTVRARGNIEVRNVKFEKFLELLITEIAQRDVEQTTVKALK.

The interval 139-433 is catalytic; the sequence is DHRLIGEKLD…LLEHFKGKLP (295 aa). 3 residues coordinate Zn(2+): Cys-231, His-282, and His-410.

This sequence belongs to the class-II aminoacyl-tRNA synthetase family. Homodimer. Probably interacts with its editing subunit. It depends on Zn(2+) as a cofactor.

Its subcellular location is the cytoplasm. The enzyme catalyses tRNA(Thr) + L-threonine + ATP = L-threonyl-tRNA(Thr) + AMP + diphosphate + H(+). Catalyzes the attachment of threonine to tRNA(Thr) in a two-step reaction: L-threonine is first activated by ATP to form Thr-AMP and then transferred to the acceptor end of tRNA(Thr). Also activates L-serine and transfers it to tRNA(Thr) but cannot deacylate incorrectly charged amino acid; unlike most archaea the editing function is found in a freestanding protein. In Saccharolobus islandicus (strain M.16.4 / Kamchatka #3) (Sulfolobus islandicus), this protein is Threonine--tRNA ligase catalytic subunit.